Reading from the N-terminus, the 137-residue chain is Lysozyme (137 aa).

Residues 1-20 form the signal peptide; the sequence is MQRLLGSIVILATVFTFCEA. One can recognise an I-type lysozyme domain in the interval 21–135; that stretch reads TISSACLRCI…EKVHQQGCNV (115 aa). 6 disulfide bridges follow: cysteine 26–cysteine 102, cysteine 31–cysteine 37, cysteine 42–cysteine 51, cysteine 64–cysteine 84, cysteine 74–cysteine 80, and cysteine 98–cysteine 116. Glutamate 34 serves as the catalytic Proton donor. Catalysis depends on aspartate 45, which acts as the Nucleophile. A substrate-binding site is contributed by 57–63; sequence KENYWED. Residues tyrosine 88 and 109–111 each bind substrate; that span reads HNG.

This sequence belongs to the glycosyl hydrolase 22 family. Type-I lysozyme subfamily. In terms of tissue distribution, expressed in the basophil cells of the oyster digestive gland.

Its subcellular location is the secreted. It catalyses the reaction Hydrolysis of (1-&gt;4)-beta-linkages between N-acetylmuramic acid and N-acetyl-D-glucosamine residues in a peptidoglycan and between N-acetyl-D-glucosamine residues in chitodextrins.. Functionally, has bacteriolytic activity. May play a role in digestion and in the host defense mechanisms against invading microbes. This Magallana gigas (Pacific oyster) protein is Lysozyme (lysoz).